The sequence spans 209 residues: LexA repressor (209 aa).

Residues 29–49 (VREIGSAIGLSSTSTVHGHID) constitute a DNA-binding region (H-T-H motif). Catalysis depends on for autocatalytic cleavage activity residues serine 130 and lysine 168.

It belongs to the peptidase S24 family. In terms of assembly, homodimer.

It catalyses the reaction Hydrolysis of Ala-|-Gly bond in repressor LexA.. Represses a number of genes involved in the response to DNA damage (SOS response), including recA and lexA. In the presence of single-stranded DNA, RecA interacts with LexA causing an autocatalytic cleavage which disrupts the DNA-binding part of LexA, leading to derepression of the SOS regulon and eventually DNA repair. This chain is LexA repressor, found in Pediococcus pentosaceus (strain ATCC 25745 / CCUG 21536 / LMG 10740 / 183-1w).